The following is a 104-amino-acid chain: MAKGQAVGINKGFITTQLEKKLQKHSAVQRKGKLGKRVALVRQVIREVTGFAPYEKRIIELIKAGSAKDSKKATKIARKRLGTHRRAKVKKALLEEAVRAQRKK.

It belongs to the eukaryotic ribosomal protein eL36 family.

In Tetrahymena thermophila (strain SB210), this protein is Large ribosomal subunit protein eL36 (RPL36).